The sequence spans 285 residues: Nucleotide-binding protein Gmet_1286 (285 aa).

8 to 15 (GLSGSGKS) serves as a coordination point for ATP. Residue 59-62 (DIRG) coordinates GTP.

It belongs to the RapZ-like family.

In terms of biological role, displays ATPase and GTPase activities. The protein is Nucleotide-binding protein Gmet_1286 of Geobacter metallireducens (strain ATCC 53774 / DSM 7210 / GS-15).